A 250-amino-acid chain; its full sequence is Homeobox protein DLL-1 (250 aa).

Disordered stretches follow at residues 40-66 (YPSL…SGSN) and 84-106 (SPYL…PDQQ). A compositionally biased stretch (polar residues) spans 84-98 (SPYLQSCNSNTTTQS). Positions 125-184 (IRKPRTIYSSLQLQALNHRFQQTQYLALPERAELAASLGVTQTQVKIWFQNKRSKYKKLI) form a DNA-binding region, homeobox.

The protein belongs to the distal-less homeobox family.

The protein resides in the nucleus. In Xenopus laevis (African clawed frog), this protein is Homeobox protein DLL-1 (dll1).